The sequence spans 319 residues: Coproporphyrin III ferrochelatase 2 (319 aa).

Residues tyrosine 13, arginine 30, 46-47, serine 54, and tyrosine 125 contribute to the Fe-coproporphyrin III site; that span reads RY. 2 residues coordinate Fe(2+): histidine 181 and glutamate 262.

The protein belongs to the ferrochelatase family.

The protein localises to the cytoplasm. The catalysed reaction is Fe-coproporphyrin III + 2 H(+) = coproporphyrin III + Fe(2+). Its pathway is porphyrin-containing compound metabolism; protoheme biosynthesis. Its function is as follows. Involved in coproporphyrin-dependent heme b biosynthesis. Catalyzes the insertion of ferrous iron into coproporphyrin III to form Fe-coproporphyrin III. The polypeptide is Coproporphyrin III ferrochelatase 2 (Bacillus thuringiensis subsp. konkukian (strain 97-27)).